The following is a 159-amino-acid chain: Ethylene-responsive transcription factor ERF069 (159 aa).

Disordered regions lie at residues 1–36 (MKRIVRISFTDMEATDSSSSEDESPPSSRRRGKKLV) and 128–159 (DAPTNFGRPDVDSAVVKKQDSDASGGASEEVV). The segment at residues 74 to 134 (KFRGVRQRPW…IGPDAPTNFG (61 aa)) is a DNA-binding region (AP2/ERF). Basic and acidic residues predominate over residues 136–148 (PDVDSAVVKKQDS).

It belongs to the AP2/ERF transcription factor family. ERF subfamily.

The protein localises to the nucleus. In terms of biological role, probably acts as a transcriptional activator. Binds to the GCC-box pathogenesis-related promoter element. May be involved in the regulation of gene expression by stress factors and by components of stress signal transduction pathways. In Arabidopsis thaliana (Mouse-ear cress), this protein is Ethylene-responsive transcription factor ERF069 (ERF069).